We begin with the raw amino-acid sequence, 281 residues long: Acetyl-coenzyme A carboxylase carboxyl transferase subunit beta (281 aa).

The CoA carboxyltransferase N-terminal domain maps to 24-281; sequence GLWYKSPKGK…TKLLTMLANN (258 aa).

It belongs to the AccD/PCCB family. As to quaternary structure, acetyl-CoA carboxylase is a heterohexamer composed of biotin carboxyl carrier protein (AccB), biotin carboxylase (AccC) and two subunits each of ACCase subunit alpha (AccA) and ACCase subunit beta (AccD).

The protein resides in the cytoplasm. It catalyses the reaction N(6)-carboxybiotinyl-L-lysyl-[protein] + acetyl-CoA = N(6)-biotinyl-L-lysyl-[protein] + malonyl-CoA. It participates in lipid metabolism; malonyl-CoA biosynthesis; malonyl-CoA from acetyl-CoA: step 1/1. Component of the acetyl coenzyme A carboxylase (ACC) complex. Biotin carboxylase (BC) catalyzes the carboxylation of biotin on its carrier protein (BCCP) and then the CO(2) group is transferred by the transcarboxylase to acetyl-CoA to form malonyl-CoA. This chain is Acetyl-coenzyme A carboxylase carboxyl transferase subunit beta, found in Amoebophilus asiaticus (strain 5a2).